Reading from the N-terminus, the 301-residue chain is Ornithine carbamoyltransferase (301 aa).

Carbamoyl phosphate is bound by residues 47 to 50 (STRT), Gln-74, Arg-98, and 125 to 128 (HPCQ). L-ornithine is bound by residues Asn-156, Asp-220, and 224–225 (SM). Carbamoyl phosphate-binding positions include 260–261 (CL) and Arg-288.

This sequence belongs to the aspartate/ornithine carbamoyltransferase superfamily. OTCase family.

It localises to the cytoplasm. It catalyses the reaction carbamoyl phosphate + L-ornithine = L-citrulline + phosphate + H(+). It functions in the pathway amino-acid biosynthesis; L-arginine biosynthesis; L-arginine from L-ornithine and carbamoyl phosphate: step 1/3. In terms of biological role, reversibly catalyzes the transfer of the carbamoyl group from carbamoyl phosphate (CP) to the N(epsilon) atom of ornithine (ORN) to produce L-citrulline. In Methanobrevibacter smithii (strain ATCC 35061 / DSM 861 / OCM 144 / PS), this protein is Ornithine carbamoyltransferase.